Here is a 133-residue protein sequence, read N- to C-terminus: Ycf54-like protein (133 aa).

The protein belongs to the ycf54 family.

The protein is Ycf54-like protein of Synechocystis sp. (strain ATCC 27184 / PCC 6803 / Kazusa).